The following is a 3433-amino-acid chain: Genome polyprotein (3433 aa).

The segment at 2–15 (SKKPGGPGKSRAVN) is interaction with host EXOC1. Residues 2-108 (SKKPGGPGKS…SSKQKKRGGK (107 aa)) lie on the Cytoplasmic side of the membrane. The segment at 37–72 (LIDGKGPIRFVLALLAFFRFTAIAPTRAVLDRWRGV) is hydrophobic; homodimerization of capsid protein C. Residues 106-123 (GGKTGIAVMIGLIASVGA) constitute a propeptide, ER anchor for the capsid protein C, removed in mature form by serine protease NS3. Residues 109 to 129 (TGIAVMIGLIASVGAVTLSNF) form a helical membrane-spanning segment. The Extracellular portion of the chain corresponds to 130-248 (QGKVMMTVNA…KATRYLVKTE (119 aa)). N-linked (GlcNAc...) asparagine; by host glycosylation is present at asparagine 138. The chain crosses the membrane as a helical span at residues 249–269 (SWILRNPGYALVAAVIGWMLG). The Cytoplasmic portion of the chain corresponds to 270-275 (SNTMQR). The helical transmembrane segment at 276–290 (VVFVVLLLLVAPAYS) threads the bilayer. Over 291-743 (FNCLGMSNRD…QVFGGAFRSL (453 aa)) the chain is Extracellular. Cystine bridges form between cysteine 293–cysteine 320, cysteine 350–cysteine 406, cysteine 350–cysteine 411, cysteine 364–cysteine 395, cysteine 382–cysteine 406, and cysteine 382–cysteine 411. Positions 388–401 (DRGWGNGCGLFGKG) are fusion peptide. Asparagine 444 carries an N-linked (GlcNAc...) asparagine; by host glycan. 2 disulfide bridges follow: cysteine 480-cysteine 578 and cysteine 595-cysteine 626. The helical transmembrane segment at 744–764 (FGGMSWITQGLLGALLLWMGI) threads the bilayer. The Cytoplasmic segment spans residues 765-770 (NARDRS). A helical membrane pass occupies residues 771 to 791 (IALTFLAVGGVLLFLSVNVHA). Topologically, residues 792–1216 (DTGCAIDISR…AFAESNSGGD (425 aa)) are extracellular. Cystine bridges form between cysteine 795-cysteine 806 and cysteine 846-cysteine 934. Residues asparagine 921, asparagine 966, and asparagine 998 are each glycosylated (N-linked (GlcNAc...) asparagine; by host). 4 disulfides stabilise this stretch: cysteine 970/cysteine 1014, cysteine 1071/cysteine 1120, cysteine 1082/cysteine 1103, and cysteine 1104/cysteine 1107. A helical membrane pass occupies residues 1217–1237 (VVHLALMATFKIQPVFMVASF). Topologically, residues 1238–1245 (LKARWTNQ) are cytoplasmic. Residues 1246–1268 (ENILLMLAAVFFQMAYHDARQIL) form a helical membrane-spanning segment. Residues 1269-1288 (LWEIPDVLNSLAVAWMILRA) are Lumenal-facing. The helical transmembrane segment at 1289-1309 (ITFTTTSNVVVPLLALLTPGL) threads the bilayer. Topologically, residues 1310 to 1313 (RCLN) are cytoplasmic. The chain crosses the membrane as a helical span at residues 1314-1331 (LDVYRILLLMVGIGSLIR). Topologically, residues 1332 to 1345 (EKRSAAAKKKGASL) are lumenal. A helical membrane pass occupies residues 1346–1366 (LCLALASTGLFNPMILAAGLI). At 1367–1375 (ACDPNRKRG) the chain is on the cytoplasmic side. A helical transmembrane segment spans residues 1376–1396 (WPATEVMTAVGLMFAIVGGLA). The Lumenal portion of the chain corresponds to 1397-1399 (ELD). The helical transmembrane segment at 1400–1420 (IDSMAIPMTIAGLMFAAFVIS) threads the bilayer. At 1421-1477 (GKSTDMWIERTADISWESDAEITGSSERVDVRLDDDGNFQLMNDPGAPWKIWMLRMV) the chain is on the cytoplasmic side. Residues 1428 to 1467 (IERTADISWESDAEITGSSERVDVRLDDDGNFQLMNDPGA) are interacts with and activates NS3 protease. Residues 1478-1498 (CLAISAYTPWAILPSVVGFWI) constitute an intramembrane region (helical). The Cytoplasmic segment spans residues 1499–2174 (TLQYTKRGGV…RMALEELPDA (676 aa)). The region spanning 1506–1683 (GGVLWDTPSP…ERMDEPIPAG (178 aa)) is the Peptidase S7 domain. Active-site charge relay system; for serine protease NS3 activity residues include histidine 1556, aspartate 1580, and serine 1640. In terms of domain architecture, Helicase ATP-binding spans 1686 to 1842 (PEMLRKKQIT…ESNSPISDLQ (157 aa)). Positions 1690–1693 (RKKQ) are important for RNA-binding. 1699–1706 (LHPGAGKT) contributes to the ATP binding site. The short motif at 1790 to 1793 (DEAH) is the DEAH box element. The region spanning 1853-2018 (GYEWITEYTG…GLIAQFYQPE (166 aa)) is the Helicase C-terminal domain. N6-acetyllysine; by host is present on lysine 1894. The regulates the ATPase activity of NS3 helicase stretch occupies residues 2169 to 2173 (EELPD). A helical membrane pass occupies residues 2175–2195 (LQTIALIALLSVMTMGVFFLL). At 2196-2200 (MQRKG) the chain is on the lumenal side. Positions 2201 to 2221 (IGKIGLGGAVLGVATFFCWMA) form an intramembrane region, helical. Residue glutamate 2222 is a topological domain, lumenal. The chain crosses the membrane as a helical span at residues 2223–2243 (VPGTKIAGMLLLSLLLMIVLI). Topologically, residues 2244-2258 (PEPEKQRSQTDNQLA) are cytoplasmic. A helical transmembrane segment spans residues 2259–2279 (VFLICVMTLVSAVAANEMGWL). At 2280–2312 (DKTKSDISSLFGQRIEVKENFSMGEFLLDLRPA) the chain is on the lumenal side. An intramembrane region (helical) is located at residues 2313 to 2333 (TAWSLYAVTTAVLTPLLKHLI). The Lumenal portion of the chain corresponds to 2334–2380 (TSDYINTSLTSINVQASALFTLARGFPFVDVGVSALLLAAGCWGQVT). The helical transmembrane segment at 2381–2401 (LTVTVTAATLLFCHYAYMVPG) threads the bilayer. Residues 2402-2444 (WQAEAMRSAQRRTAAGIMKNAVVDGIVATDVPELERTTPIMQK) are Cytoplasmic-facing. Residues 2445-2465 (KVGQIMLILVSLAAVVVNPSV) form a helical membrane-spanning segment. The Lumenal segment spans residues 2466–2470 (KTVRE). A helical transmembrane segment spans residues 2471–2491 (AGILITAAAVTLWENGASSVW). At 2492–3433 (NATTAIGLCH…DTTLVEDTVL (942 aa)) the chain is on the cytoplasmic side. One can recognise an mRNA cap 0-1 NS5-type MT domain in the interval 2529–2794 (GGAKGRTLGE…DVNLGSGTRA (266 aa)). Serine 2584 contributes to the S-adenosyl-L-methionine binding site. Serine 2584 is modified (phosphoserine). Lysine 2589 (for 2'-O-MTase activity) is an active-site residue. S-adenosyl-L-methionine is bound by residues glycine 2614, tryptophan 2615, threonine 2632, lysine 2633, glutamate 2639, aspartate 2659, valine 2660, aspartate 2674, and isoleucine 2675. Aspartate 2674 (for 2'-O-MTase activity) is an active-site residue. Active-site for 2'-O-MTase activity residues include lysine 2710 and glutamate 2746. Tyrosine 2748 lines the S-adenosyl-L-methionine pocket. Positions 2917-2919 (REK) match the Nuclear localization signal motif. 4 residues coordinate Zn(2+): glutamate 2968, histidine 2972, cysteine 2977, and cysteine 2980. The RdRp catalytic domain maps to 3058-3210 (GKIYADDTAG…KPLDDRFATS (153 aa)). The Zn(2+) site is built by histidine 3245, cysteine 3261, and cysteine 3380. A PDZ-binding motif is present at residues 3431 to 3433 (TVL).

The protein in the N-terminal section; belongs to the class I-like SAM-binding methyltransferase superfamily. mRNA cap 0-1 NS5-type methyltransferase family. In terms of assembly, homodimer. Interacts (via N-terminus) with host EXOC1 (via C-terminus); this interaction results in EXOC1 degradation through the proteasome degradation pathway. Interacts with host DDX56; this interaction plays an important role in genomic RNA encapsidation. Forms heterodimers with envelope protein E in the endoplasmic reticulum and Golgi. As to quaternary structure, homodimer; in the endoplasmic reticulum and Golgi. In terms of assembly, homodimer; Homohexamer when secreted. NS1 interacts with NS4B. Interacts with host complement protein CFH; this interaction leads to the degradation of C3. Forms a heterodimer with serine protease NS3. May form homooligomers. Interacts with human SPCS1. As to quaternary structure, forms a heterodimer with NS2B. Interacts with NS4B. Interacts with unphosphorylated RNA-directed RNA polymerase NS5; this interaction stimulates RNA-directed RNA polymerase NS5 guanylyltransferase activity. In terms of assembly, interacts with host RTN3; this interaction is important to remodel host cell membranes. Interacts with Serine protease/Helicase NS3. Interacts with NS1. As to quaternary structure, homodimer. Interacts with host STAT2; this interaction inhibits the phosphorylation of the latter, and, when all viral proteins are present (polyprotein), targets STAT2 for degradation. Specific enzymatic cleavages in vivo yield mature proteins. Cleavages in the lumen of endoplasmic reticulum are performed by host signal peptidase, whereas cleavages in the cytoplasmic side are performed by serine protease NS3. Signal cleavage at the 2K-4B site requires a prior NS3 protease-mediated cleavage at the 4A-2K site. In terms of processing, cleaved in post-Golgi vesicles by a host furin, releasing the mature small envelope protein M, and peptide pr. This cleavage is incomplete as up to 30% of viral particles still carry uncleaved prM. Post-translationally, N-glycosylated. N-glycosylated. The excreted form is glycosylated and this is required for efficient secretion of the protein from infected cells. In terms of processing, acetylated by host KAT5. Acetylation modulates NS3 RNA-binding and unwinding activities and plays an important positive role for viral replication. Post-translationally, phosphorylated on serines residues. This phosphorylation may trigger NS5 nuclear localization.

The protein localises to the virion. It localises to the host nucleus. Its subcellular location is the host cytoplasm. The protein resides in the host perinuclear region. It is found in the secreted. The protein localises to the virion membrane. It localises to the host endoplasmic reticulum membrane. It catalyses the reaction Selective hydrolysis of -Xaa-Xaa-|-Yaa- bonds in which each of the Xaa can be either Arg or Lys and Yaa can be either Ser or Ala.. It carries out the reaction RNA(n) + a ribonucleoside 5'-triphosphate = RNA(n+1) + diphosphate. The catalysed reaction is a ribonucleoside 5'-triphosphate + H2O = a ribonucleoside 5'-diphosphate + phosphate + H(+). The enzyme catalyses ATP + H2O = ADP + phosphate + H(+). It catalyses the reaction a 5'-end (5'-triphosphoguanosine)-ribonucleoside in mRNA + S-adenosyl-L-methionine = a 5'-end (N(7)-methyl 5'-triphosphoguanosine)-ribonucleoside in mRNA + S-adenosyl-L-homocysteine. It carries out the reaction a 5'-end (N(7)-methyl 5'-triphosphoguanosine)-ribonucleoside in mRNA + S-adenosyl-L-methionine = a 5'-end (N(7)-methyl 5'-triphosphoguanosine)-(2'-O-methyl-ribonucleoside) in mRNA + S-adenosyl-L-homocysteine + H(+). Plays a role in virus budding by binding to the cell membrane and gathering the viral RNA into a nucleocapsid that forms the core of a mature virus particle. During virus entry, may induce genome penetration into the host cytoplasm after hemifusion induced by the surface proteins. Can migrate to the cell nucleus where it modulates host functions. Overcomes the anti-viral effects of host EXOC1 by sequestering and degrading the latter through the proteasome degradation pathway. Functionally, inhibits RNA silencing by interfering with host Dicer. In terms of biological role, prevents premature fusion activity of envelope proteins in trans-Golgi by binding to envelope protein E at pH6.0. After virion release in extracellular space, gets dissociated from E dimers. Its function is as follows. Acts as a chaperone for envelope protein E during intracellular virion assembly by masking and inactivating envelope protein E fusion peptide. prM is the only viral peptide matured by host furin in the trans-Golgi network probably to avoid catastrophic activation of the viral fusion activity in acidic Golgi compartment prior to virion release. prM-E cleavage is inefficient, and many virions are only partially matured. These uncleaved prM would play a role in immune evasion. May play a role in virus budding. Exerts cytotoxic effects by activating a mitochondrial apoptotic pathway through M ectodomain. May display a viroporin activity. Functionally, binds to host cell surface receptor and mediates fusion between viral and cellular membranes. Envelope protein is synthesized in the endoplasmic reticulum in the form of heterodimer with protein prM. They play a role in virion budding in the ER, and the newly formed immature particle is covered with 60 spikes composed of heterodimer between precursor prM and envelope protein E. The virion is transported to the Golgi apparatus where the low pH causes dissociation of PrM-E heterodimers and formation of E homodimers. prM-E cleavage is inefficient, and many virions are only partially matured. These uncleaved prM would play a role in immune evasion. In terms of biological role, involved in immune evasion, pathogenesis and viral replication. Once cleaved off the polyprotein, is targeted to three destinations: the viral replication cycle, the plasma membrane and the extracellular compartment. Essential for viral replication. Required for formation of the replication complex and recruitment of other non-structural proteins to the ER-derived membrane structures. Excreted as a hexameric lipoparticle that plays a role against host immune response. Antagonizing the complement function. Binds to the host macrophages and dendritic cells. Inhibits signal transduction originating from Toll-like receptor 3 (TLR3). Its function is as follows. Component of the viral RNA replication complex that functions in virion assembly and antagonizes the host alpha/beta interferon antiviral response. Required cofactor for the serine protease function of NS3. May have membrane-destabilizing activity and form viroporins. Functionally, displays three enzymatic activities: serine protease, NTPase and RNA helicase. NS3 serine protease, in association with NS2B, performs its autocleavage and cleaves the polyprotein at dibasic sites in the cytoplasm: C-prM, NS2A-NS2B, NS2B-NS3, NS3-NS4A, NS4A-2K and NS4B-NS5. NS3 RNA helicase binds RNA and unwinds dsRNA in the 3' to 5' direction. NS3 supports the separation of RNA daughter and template strands during viral replication. The helicase part is involved in the inhibition of phosphorylation of host STAT1, and thereby inhibition of host type-I IFN signaling. In addition, NS3 assists the initiation of replication by unwinding the RNA secondary structure in the 3' non-translated region (NTR). Inhibits STAT2 translocation in the nucleus after IFN-alpha treatment. In terms of biological role, facilitates host membrane remodelling necessary for viral replication by interacting with host RTN3. Regulates the ATPase activity of the NS3 helicase activity. NS4A allows NS3 helicase to conserve energy during unwinding. Its function is as follows. Functions as a signal peptide for NS4B and is required for the interferon antagonism activity of the latter. Induces the formation of ER-derived membrane vesicles where the viral replication takes place. Inhibits interferon (IFN)-induced host STAT1 phosphorylation and nuclear translocation, thereby preventing the establishment of cellular antiviral state by blocking the IFN-alpha/beta pathway. Inhibits STAT2 translocation in the nucleus after IFN-alpha treatment. Functionally, replicates the viral (+) and (-) genome, and performs the capping of genomes in the cytoplasm. NS5 methylates viral RNA cap at guanine N-7 and ribose 2'-O positions. Besides its role in RNA genome replication, also prevents the establishment of cellular antiviral state by blocking the interferon-alpha/beta (IFN-alpha/beta) signaling pathway. Inhibits host JAK1 and TYK2 phosphorylation, thereby preventing activation of JAK-STAT signaling pathway. This chain is Genome polyprotein, found in Aedes (Tropical bont tick).